The sequence spans 348 residues: UDP-3-O-acylglucosamine N-acyltransferase (348 aa).

His248 serves as the catalytic Proton acceptor.

Belongs to the transferase hexapeptide repeat family. LpxD subfamily. Homotrimer.

It carries out the reaction a UDP-3-O-[(3R)-3-hydroxyacyl]-alpha-D-glucosamine + a (3R)-hydroxyacyl-[ACP] = a UDP-2-N,3-O-bis[(3R)-3-hydroxyacyl]-alpha-D-glucosamine + holo-[ACP] + H(+). Its pathway is bacterial outer membrane biogenesis; LPS lipid A biosynthesis. In terms of biological role, catalyzes the N-acylation of UDP-3-O-acylglucosamine using 3-hydroxyacyl-ACP as the acyl donor. Is involved in the biosynthesis of lipid A, a phosphorylated glycolipid that anchors the lipopolysaccharide to the outer membrane of the cell. This is UDP-3-O-acylglucosamine N-acyltransferase from Rippkaea orientalis (strain PCC 8801 / RF-1) (Cyanothece sp. (strain PCC 8801)).